The primary structure comprises 294 residues: Nucleotide-binding protein Reut_A0350 (294 aa).

8 to 15 (GISGSGKS) is a binding site for ATP. 57–60 (DIRS) provides a ligand contact to GTP.

This sequence belongs to the RapZ-like family.

Displays ATPase and GTPase activities. The sequence is that of Nucleotide-binding protein Reut_A0350 from Cupriavidus pinatubonensis (strain JMP 134 / LMG 1197) (Cupriavidus necator (strain JMP 134)).